The chain runs to 470 residues: Siroheme synthase 2 (470 aa).

A precorrin-2 dehydrogenase /sirohydrochlorin ferrochelatase region spans residues methionine 1–leucine 202. Residues glutamate 22–valine 23 and proline 43–glutamate 44 each bind NAD(+). Serine 126 is modified (phosphoserine). Residues glycine 214–alanine 470 are uroporphyrinogen-III C-methyltransferase. Proline 223 is an S-adenosyl-L-methionine binding site. Catalysis depends on aspartate 246, which acts as the Proton acceptor. Residue lysine 268 is the Proton donor of the active site. S-adenosyl-L-methionine-binding positions include glycine 299–aspartate 301, threonine 329–alanine 330, methionine 381, and glycine 410.

It in the N-terminal section; belongs to the precorrin-2 dehydrogenase / sirohydrochlorin ferrochelatase family. This sequence in the C-terminal section; belongs to the precorrin methyltransferase family.

The catalysed reaction is uroporphyrinogen III + 2 S-adenosyl-L-methionine = precorrin-2 + 2 S-adenosyl-L-homocysteine + H(+). It carries out the reaction precorrin-2 + NAD(+) = sirohydrochlorin + NADH + 2 H(+). The enzyme catalyses siroheme + 2 H(+) = sirohydrochlorin + Fe(2+). The protein operates within cofactor biosynthesis; adenosylcobalamin biosynthesis; precorrin-2 from uroporphyrinogen III: step 1/1. It participates in cofactor biosynthesis; adenosylcobalamin biosynthesis; sirohydrochlorin from precorrin-2: step 1/1. It functions in the pathway porphyrin-containing compound metabolism; siroheme biosynthesis; precorrin-2 from uroporphyrinogen III: step 1/1. Its pathway is porphyrin-containing compound metabolism; siroheme biosynthesis; siroheme from sirohydrochlorin: step 1/1. The protein operates within porphyrin-containing compound metabolism; siroheme biosynthesis; sirohydrochlorin from precorrin-2: step 1/1. Its function is as follows. Multifunctional enzyme that catalyzes the SAM-dependent methylations of uroporphyrinogen III at position C-2 and C-7 to form precorrin-2 via precorrin-1. Then it catalyzes the NAD-dependent ring dehydrogenation of precorrin-2 to yield sirohydrochlorin. Finally, it catalyzes the ferrochelation of sirohydrochlorin to yield siroheme. In Aeromonas hydrophila subsp. hydrophila (strain ATCC 7966 / DSM 30187 / BCRC 13018 / CCUG 14551 / JCM 1027 / KCTC 2358 / NCIMB 9240 / NCTC 8049), this protein is Siroheme synthase 2.